The primary structure comprises 321 residues: Lipoyl synthase (321 aa).

C68, C73, C79, C94, C98, C101, and S308 together coordinate [4Fe-4S] cluster. Residues 80–297 (FNHGTATFMI…KAYADEIGFT (218 aa)) form the Radical SAM core domain.

The protein belongs to the radical SAM superfamily. Lipoyl synthase family. [4Fe-4S] cluster serves as cofactor.

It localises to the cytoplasm. It carries out the reaction [[Fe-S] cluster scaffold protein carrying a second [4Fe-4S](2+) cluster] + N(6)-octanoyl-L-lysyl-[protein] + 2 oxidized [2Fe-2S]-[ferredoxin] + 2 S-adenosyl-L-methionine + 4 H(+) = [[Fe-S] cluster scaffold protein] + N(6)-[(R)-dihydrolipoyl]-L-lysyl-[protein] + 4 Fe(3+) + 2 hydrogen sulfide + 2 5'-deoxyadenosine + 2 L-methionine + 2 reduced [2Fe-2S]-[ferredoxin]. The protein operates within protein modification; protein lipoylation via endogenous pathway; protein N(6)-(lipoyl)lysine from octanoyl-[acyl-carrier-protein]: step 2/2. Its function is as follows. Catalyzes the radical-mediated insertion of two sulfur atoms into the C-6 and C-8 positions of the octanoyl moiety bound to the lipoyl domains of lipoate-dependent enzymes, thereby converting the octanoylated domains into lipoylated derivatives. The polypeptide is Lipoyl synthase (Pseudoalteromonas translucida (strain TAC 125)).